The chain runs to 656 residues: MESPFSPVLPHGPGEDWESTLFAELGYFTDTDDVQFDAAHETYENNFDHLNFDLDLMPWESDIWSPSSHFCSDIKAEPQPLSPASSSCSVSSPRSTDSCSSTQHVPEELDLLSSSQSPLSLYGDSCHSPSSAEPLKEEKPVTGPGNKTEHGLTPKKKIQMSSKPSVQPKPLLLPAAPKTPANASVPAKTIIIQTLPALMPLAKQQSIISIQPAPTKGQTVLLSQPAVVQLQTPGVLPSAQPVLAVTGGATQLPNHVVNVVPAPVVNSPVNGKLCVTKPVLQSSTRSTGSDIAVLRRQQRMIKNRESACQSRKKKKEYMLGLEARLKAALSENEQLKKENGSLKRQLDQVVSENQRLKVPSPKRRAVCVMIVLAFIMLNYGPMSMLEQDSRRVKPSVSPANQRRHLLEFSAKEVKDTSDGDNQKNSYRYDHSVSNDKALMVLSEEPLLYIPPPPCQPLINTTESLRLNHELRGWVHRHEVERTKSRRMTNSQQKTRILQGALEQGSNSQLMAVQYTETTSISRNSGSELQVYYASPGSYQGFFDAIRRRGDTFYVVSFRRDHLLLPATTHNKTTRPKMSIVLPAININDNVINGQDYEVMMQIDCQVMDTRILHIKSSSVPPYLRDHQRNQTSTFFGSPPTATETTHVVSTLPESVQ.

The segment at 1–137 (MESPFSPVLP…SPSSAEPLKE (137 aa)) is transcription activation. A Glycyl lysine isopeptide (Lys-Gly) (interchain with G-Cter in SUMO2) cross-link involves residue Lys75. Low complexity-rich tracts occupy residues 81 to 101 (LSPA…SCSS) and 111 to 121 (LLSSSQSPLSL). The disordered stretch occupies residues 81-171 (LSPASSSCSV…SKPSVQPKPL (91 aa)). Lys139 is covalently cross-linked (Glycyl lysine isopeptide (Lys-Gly) (interchain with G-Cter in ubiquitin)). A bZIP domain is found at 293–356 (VLRRQQRMIK…DQVVSENQRL (64 aa)). Residues 295 to 326 (RRQQRMIKNRESACQSRKKKKEYMLGLEARLK) are basic motif. The leucine-zipper stretch occupies residues 335–342 (LKKENGSL). The helical; Signal-anchor for type II membrane protein transmembrane segment at 378-398 (NYGPMSMLEQDSRRVKPSVSP) threads the bilayer. At 399 to 656 (ANQRRHLLEF…VVSTLPESVQ (258 aa)) the chain is on the lumenal side. The interaction with THBS4 stretch occupies residues 455–575 (QPLINTTESL…ATTHNKTTRP (121 aa)). Residues Asn459, Asn570, and Asn629 are each glycosylated (N-linked (GlcNAc...) asparagine). The segment at 632-656 (STFFGSPPTATETTHVVSTLPESVQ) is disordered.

The protein belongs to the bZIP family. ATF subfamily. As to quaternary structure, interacts with XBP1 isoform 2; the interaction occurs in a ER stress-dependent manner. Interacts with LACC1. Interacts with THBS4 (via EGF-like 3; calcium-binding domain) which facilitates its processing, activation and nuclear translocation. Interacts (via lumenal domain) with THBS1. In terms of assembly, homodimer and heterodimer with ATF6-beta. The dimer interacts with the nuclear transcription factor Y (NF-Y) trimer through direct binding to NF-Y subunit C (NF-YC). Also interacts with the transcription factors GTF2I, YY1 and SRF. During unfolded protein response, a fragment of approximately 50 kDa containing the cytoplasmic transcription factor domain is released by proteolysis. The cleavage seems to be performed sequentially by site-1 (MBTPS1, S1P) and site-2 (MBTPS2, S2P) proteases. In terms of processing, N-glycosylated; in its luminal domain. The glycosylation status may serve as a sensor for ER homeostasis, resulting in ATF6 activation to trigger the unfolded protein response (UPR). Post-translationally, ubiquitinated by RNF186 at Lys-139, which is required for pattern recognition receptor-induced unfolded protein response-associated outcomes.

It localises to the endoplasmic reticulum membrane. The protein localises to the golgi apparatus membrane. It is found in the nucleus. Its function is as follows. Precursor of the transcription factor form (Processed cyclic AMP-dependent transcription factor ATF-6 alpha), which is embedded in the endoplasmic reticulum membrane. Endoplasmic reticulum stress promotes processing of this form, releasing the transcription factor form that translocates into the nucleus, where it activates transcription of genes involved in the unfolded protein response (UPR). In terms of biological role, transcription factor that initiates the unfolded protein response (UPR) during endoplasmic reticulum stress by activating transcription of genes involved in the UPR. Binds DNA on the 5'-CCAC[GA]-3'half of the ER stress response element (ERSE) (5'-CCAAT-N(9)-CCAC[GA]-3') and of ERSE II (5'-ATTGG-N-CCACG-3'). Binding to ERSE requires binding of NF-Y to ERSE. Could also be involved in activation of transcription by the serum response factor. May play a role in foveal development and cone function in the retina. The protein is Cyclic AMP-dependent transcription factor ATF-6 alpha (Atf6) of Rattus norvegicus (Rat).